Consider the following 1790-residue polypeptide: E3 ubiquitin-protein ligase RBBP6 (1790 aa).

Positions 4 to 76 constitute a DWNN domain; it reads VHYKFSSKLN…NSSVIVRRIP (73 aa). An N6-acetyllysine modification is found at K130. The CCHC-type zinc-finger motif lies at 160–177; the sequence is YTCFRCGKPGHYIKNCPT. Phosphoserine occurs at positions 245, 246, 247, and 248. The RING-type; degenerate zinc-finger motif lies at 260–301; sequence CLICKDIMTDAVVIPCCGNSYCDECIRTALLESDEHTCPTCH. Residues 329-353 are disordered; the sequence is YTKRLRKQLPPPPPPVPPPRPLMQR. Residues 337 to 349 are compositionally biased toward pro residues; that stretch reads LPPPPPPVPPPRP. S361 carries the phosphoserine modification. The disordered stretch occupies residues 374–408; sequence VTSSSAHSAPSISSLTSNPSALAPSVSGNPSSAPA. The segment covering 376–390 has biased composition (low complexity); sequence SSSAHSAPSISSLTS. A Phosphoserine modification is found at S517. 4 disordered regions span residues 533-599, 622-641, 648-667, and 675-797; these read INRG…AGYS, QTAH…SREE, RLKE…NDFA, and KIQK…REYF. The segment covering 558-599 has biased composition (pro residues); sequence VPVPPPPLYPPPPHTLPLPPGVPPPQFSPQFPPGQPPPAGYS. Polar residues predominate over residues 622-635; it reads QTAHSNTIPTTQAP. Residues 686-720 show a composition bias toward low complexity; the sequence is RSKSPYSGSSYSRSSYTYSKSRSGSTRSRSYSRSF. A compositionally biased stretch (basic residues) spans 736 to 771; the sequence is RRGRGKSRNYRSRSRSHGYHRSRSRSPPYRRYHSRS. Phosphoserine is present on residues S769, S771, S773, S781, S816, S862, and S874. Disordered regions lie at residues 850–1292 and 1322–1790; these read AQPR…TKRT and WDKD…SVTV. Positions 903 to 923 are enriched in basic and acidic residues; that stretch reads LSTRDSHNAKDNPKSKEKESE. The segment covering 932 to 941 has biased composition (basic residues); sequence NKHKKHRKRR. Composition is skewed to basic and acidic residues over residues 956 to 972, 980 to 991, 1002 to 1018, 1042 to 1072, and 1096 to 1161; these read ETSR…ETKT, SRDDATPVRDEP, VSDK…VKSD, PQEK…KIDS, and SAKE…KDFE. S958 is subject to Phosphoserine. Residues 983 to 1139 are interaction with RB1; that stretch reads DATPVRDEPM…KAKKPEKNKL (157 aa). T985 is subject to Phosphothreonine. Glycyl lysine isopeptide (Lys-Gly) (interchain with G-Cter in SUMO2) cross-links involve residues K1107 and K1169. S1179 carries the phosphoserine modification. Basic and acidic residues-rich tracts occupy residues 1182–1200 and 1231–1249; these read RKME…KDKI and EPSE…EKVK. Over residues 1260-1277 the composition is skewed to polar residues; it reads EGSSSTLVDYTSTSSTGG. T1272 bears the Phosphothreonine mark. S1278 carries the post-translational modification Phosphoserine. Basic and acidic residues predominate over residues 1281 to 1291; it reads RKSEEKTDTKR. Residues S1329, S1342, and S1348 each carry the phosphoserine modification. Over residues 1336–1358 the composition is skewed to polar residues; that stretch reads TTQPIQSVGKPSSIIKNVTTKPS. Basic and acidic residues-rich tracts occupy residues 1363-1392, 1400-1440, 1449-1460, 1469-1507, and 1515-1580; these read YTEK…ELRS, EKGR…EQGH, KETRTSEKHESV, TPGR…RGKE, and KLRE…RNGK. Residues 1434–1544 form an interaction with p53 region; the sequence is RLSEQGHFKT…SPPRDKKPHD (111 aa). T1469 bears the Phosphothreonine mark. A compositionally biased stretch (polar residues) spans 1618 to 1627; it reads LSHSSRLSSD. The segment covering 1634 to 1646 has biased composition (acidic residues); it reads EAAFEPDYNESDS. Phosphoserine is present on residues S1646, S1648, and S1651. Residues 1663 to 1675 are compositionally biased toward basic and acidic residues; the sequence is KDLKEKTTEKAKE. The span at 1689 to 1724 shows a compositional bias: low complexity; the sequence is RSQSQSSPSVSPSRSHSPSGSQTRSHSSSASSAGSQ. A compositionally biased stretch (basic residues) spans 1727 to 1750; the sequence is KKKKKKKEKKKHKKHKKHKKHKKH. A compositionally biased stretch (basic and acidic residues) spans 1751–1760; sequence AGADGDVEKS. A compositionally biased stretch (basic residues) spans 1761-1773; that stretch reads QKHKHKKKKAKKN. Basic and acidic residues predominate over residues 1774–1790; that stretch reads KDKEKEKDDQKVRSVTV.

Interacts with MDM2 and YBX1. Also interacts with p53/TP53 and RB1. Interacts with NEK6. Interacts with ZBTB38. In terms of processing, phosphorylated by NEK6. In terms of tissue distribution, highly expressed in testis. Expressed at lower levels in brain, heart, kidney, liver, lung, skeletal muscle, spleen, thymus and tongue.

Its subcellular location is the nucleus. It is found in the nucleolus. The protein resides in the chromosome. It localises to the cytoplasm. The protein localises to the cytoskeleton. Its subcellular location is the microtubule organizing center. It is found in the centrosome. It catalyses the reaction S-ubiquitinyl-[E2 ubiquitin-conjugating enzyme]-L-cysteine + [acceptor protein]-L-lysine = [E2 ubiquitin-conjugating enzyme]-L-cysteine + N(6)-ubiquitinyl-[acceptor protein]-L-lysine.. The protein operates within protein modification; protein ubiquitination. In terms of biological role, E3 ubiquitin-protein ligase which promotes ubiquitination of YBX1, leading to its degradation by the proteasome. May play a role as a scaffold protein to promote the assembly of the p53/TP53-MDM2 complex, resulting in increase of MDM2-mediated ubiquitination and degradation of p53/TP53; may function as negative regulator of p53/TP53, leading to both apoptosis and cell growth retardation. Regulates DNA-replication and common fragile sites (CFS) stability in a ZBTB38- and MCM10-dependent manner. Controls ZBTB38 protein stability and abundance via ubiquitination and proteasomal degradation, and ZBTB38 in turn negatively regulates the expression of MCM10 which plays an important role in DNA-replication. In Mus musculus (Mouse), this protein is E3 ubiquitin-protein ligase RBBP6 (Rbbp6).